The following is a 242-amino-acid chain: Biosynthetic peptidoglycan transglycosylase (242 aa).

A helical transmembrane segment spans residues 19 to 39 (ILAALAVFWGGGIALFSVVPV).

The protein belongs to the glycosyltransferase 51 family.

The protein localises to the cell inner membrane. It carries out the reaction [GlcNAc-(1-&gt;4)-Mur2Ac(oyl-L-Ala-gamma-D-Glu-L-Lys-D-Ala-D-Ala)](n)-di-trans,octa-cis-undecaprenyl diphosphate + beta-D-GlcNAc-(1-&gt;4)-Mur2Ac(oyl-L-Ala-gamma-D-Glu-L-Lys-D-Ala-D-Ala)-di-trans,octa-cis-undecaprenyl diphosphate = [GlcNAc-(1-&gt;4)-Mur2Ac(oyl-L-Ala-gamma-D-Glu-L-Lys-D-Ala-D-Ala)](n+1)-di-trans,octa-cis-undecaprenyl diphosphate + di-trans,octa-cis-undecaprenyl diphosphate + H(+). The protein operates within cell wall biogenesis; peptidoglycan biosynthesis. In terms of biological role, peptidoglycan polymerase that catalyzes glycan chain elongation from lipid-linked precursors. In Salmonella choleraesuis (strain SC-B67), this protein is Biosynthetic peptidoglycan transglycosylase.